A 596-amino-acid chain; its full sequence is Probable translation initiation factor IF-2 (596 aa).

A tr-type G domain is found at 3–220 (IRSPIVSVLG…MLLGLAQEYL (218 aa)). The G1 stretch occupies residues 12-19 (GHVDHGKT). Residue 12–19 (GHVDHGKT) participates in GTP binding. The G2 stretch occupies residues 37–41 (GITQH). The G3 stretch occupies residues 76-79 (DTPG). GTP contacts are provided by residues 76–80 (DTPGH) and 130–133 (NKID). The tract at residues 130-133 (NKID) is G4. A G5 region spans residues 198–200 (SAK).

This sequence belongs to the TRAFAC class translation factor GTPase superfamily. Classic translation factor GTPase family. IF-2 subfamily.

Its function is as follows. Function in general translation initiation by promoting the binding of the formylmethionine-tRNA to ribosomes. Seems to function along with eIF-2. This is Probable translation initiation factor IF-2 from Methanobrevibacter smithii (strain ATCC 35061 / DSM 861 / OCM 144 / PS).